The primary structure comprises 47 residues: Large ribosomal subunit protein bL33 (47 aa).

The protein belongs to the bacterial ribosomal protein bL33 family.

The sequence is that of Large ribosomal subunit protein bL33 from Staphylococcus saprophyticus.